The sequence spans 195 residues: UPF0314 protein RHECIAT_CH0004233 (195 aa).

The next 4 membrane-spanning stretches (helical) occupy residues 15–35, 64–84, 127–147, and 150–170; these read FWFVACVAVLVAQIVTEYLMG, WYTPSHIIHGFLFYGLGYLIL, GDSILNSAMDTVFMCVGFFFA, and APVALTVAIAIFFEIFTGYVI.

It belongs to the UPF0314 family.

It is found in the cell membrane. This chain is UPF0314 protein RHECIAT_CH0004233, found in Rhizobium etli (strain CIAT 652).